A 124-amino-acid chain; its full sequence is Small ribosomal subunit protein bS6 (124 aa).

This sequence belongs to the bacterial ribosomal protein bS6 family.

Binds together with bS18 to 16S ribosomal RNA. In Chromobacterium violaceum (strain ATCC 12472 / DSM 30191 / JCM 1249 / CCUG 213 / NBRC 12614 / NCIMB 9131 / NCTC 9757 / MK), this protein is Small ribosomal subunit protein bS6.